A 212-amino-acid chain; its full sequence is Adenine phosphoribosyltransferase (212 aa).

Belongs to the purine/pyrimidine phosphoribosyltransferase family. As to quaternary structure, homodimer.

It localises to the cytoplasm. It catalyses the reaction AMP + diphosphate = 5-phospho-alpha-D-ribose 1-diphosphate + adenine. It functions in the pathway purine metabolism; AMP biosynthesis via salvage pathway; AMP from adenine: step 1/1. Its function is as follows. Catalyzes a salvage reaction resulting in the formation of AMP, that is energically less costly than de novo synthesis. The polypeptide is Adenine phosphoribosyltransferase (Mycobacterium tuberculosis (strain ATCC 25618 / H37Rv)).